The following is a 427-amino-acid chain: Anhydro-N-acetylmuramic acid kinase (427 aa).

32-39 (GTSLDGMD) provides a ligand contact to ATP.

It belongs to the anhydro-N-acetylmuramic acid kinase family.

It carries out the reaction 1,6-anhydro-N-acetyl-beta-muramate + ATP + H2O = N-acetyl-D-muramate 6-phosphate + ADP + H(+). The protein operates within amino-sugar metabolism; 1,6-anhydro-N-acetylmuramate degradation. It functions in the pathway cell wall biogenesis; peptidoglycan recycling. Catalyzes the specific phosphorylation of 1,6-anhydro-N-acetylmuramic acid (anhMurNAc) with the simultaneous cleavage of the 1,6-anhydro ring, generating MurNAc-6-P. Is required for the utilization of anhMurNAc either imported from the medium or derived from its own cell wall murein, and thus plays a role in cell wall recycling. The sequence is that of Anhydro-N-acetylmuramic acid kinase from Psychrobacter cryohalolentis (strain ATCC BAA-1226 / DSM 17306 / VKM B-2378 / K5).